Consider the following 944-residue polypeptide: Leucine--tRNA ligase 2 (944 aa).

The 'HIGH' region motif lies at 36 to 46; sequence PYPNSPFHLGH. The short motif at 621 to 625 is the 'KMSKS' region element; sequence KMSKS. Residue K624 participates in ATP binding.

It belongs to the class-I aminoacyl-tRNA synthetase family.

It localises to the cytoplasm. It catalyses the reaction tRNA(Leu) + L-leucine + ATP = L-leucyl-tRNA(Leu) + AMP + diphosphate. The protein is Leucine--tRNA ligase 2 of Sulfurisphaera tokodaii (strain DSM 16993 / JCM 10545 / NBRC 100140 / 7) (Sulfolobus tokodaii).